The sequence spans 213 residues: ATP-dependent Clp protease proteolytic subunit (213 aa).

Catalysis depends on Ser-114, which acts as the Nucleophile. The active site involves His-139.

Belongs to the peptidase S14 family. As to quaternary structure, fourteen ClpP subunits assemble into 2 heptameric rings which stack back to back to give a disk-like structure with a central cavity, resembling the structure of eukaryotic proteasomes.

It localises to the cytoplasm. It catalyses the reaction Hydrolysis of proteins to small peptides in the presence of ATP and magnesium. alpha-casein is the usual test substrate. In the absence of ATP, only oligopeptides shorter than five residues are hydrolyzed (such as succinyl-Leu-Tyr-|-NHMec, and Leu-Tyr-Leu-|-Tyr-Trp, in which cleavage of the -Tyr-|-Leu- and -Tyr-|-Trp bonds also occurs).. Functionally, cleaves peptides in various proteins in a process that requires ATP hydrolysis. Has a chymotrypsin-like activity. Plays a major role in the degradation of misfolded proteins. The chain is ATP-dependent Clp protease proteolytic subunit from Pseudomonas putida (strain GB-1).